Consider the following 434-residue polypeptide: Putative D-alanyl-D-alanine carboxypeptidase (434 aa).

The chain crosses the membrane as a helical; Signal-anchor span at residues 7-25; the sequence is YLSLLAVSCSVSAAKYPVL.

It belongs to the peptidase S12 family. YfeW subfamily.

Its subcellular location is the cell inner membrane. The enzyme catalyses Preferential cleavage: (Ac)2-L-Lys-D-Ala-|-D-Ala. Also transpeptidation of peptidyl-alanyl moieties that are N-acyl substituents of D-alanine.. This is Putative D-alanyl-D-alanine carboxypeptidase from Escherichia coli O157:H7.